The primary structure comprises 366 residues: ATP-dependent 6-phosphofructokinase 2 (366 aa).

ATP is bound by residues Gly15, 78–79 (KD), and 119–122 (GDGT). Asp120 contacts Mg(2+). Residues 142-144 (TID), Arg179, 186-188 (MGR), Glu239, Arg284, and 290-293 (HIQR) contribute to the substrate site. The active-site Proton acceptor is the Asp144.

It belongs to the phosphofructokinase type A (PFKA) family. Mixed-substrate PFK group III subfamily. Homodimer or homotetramer. Requires Mg(2+) as cofactor.

The protein resides in the cytoplasm. The enzyme catalyses beta-D-fructose 6-phosphate + ATP = beta-D-fructose 1,6-bisphosphate + ADP + H(+). Its pathway is carbohydrate degradation; glycolysis; D-glyceraldehyde 3-phosphate and glycerone phosphate from D-glucose: step 3/4. With respect to regulation, subject to allosteric activation by ADP and other diphosphonucleosides, and inhibition by phosphoenolpyruvate. Functionally, catalyzes the phosphorylation of D-fructose 6-phosphate to fructose 1,6-bisphosphate by ATP, the first committing step of glycolysis. This chain is ATP-dependent 6-phosphofructokinase 2, found in Clostridium perfringens (strain 13 / Type A).